The following is a 439-amino-acid chain: IAA-amino acid hydrolase ILR1-like 2 (439 aa).

The first 21 residues, Met-1 to Ser-21, serve as a signal peptide directing secretion. 5 residues coordinate Mn(2+): Cys-137, His-139, Glu-173, His-197, and His-397. A Prevents secretion from ER motif is present at residues His-436 to Leu-439.

Belongs to the peptidase M20 family. In terms of assembly, monomer. The cofactor is Mn(2+). Expressed in leaves, stems, siliques, seeds and flowers. Detected in the distal tips of cotyledons and seedling leaves, hydathodes of leaves from mature plants, pollen, ovules and developing seeds.

Its subcellular location is the endoplasmic reticulum lumen. Hydrolyzes certain amino acid conjugates of the plant growth regulator indole-3-acetic acid (IAA), including IAA-Ala, IAA-Leu, IAA-Met, IAA-Phe, IAA-Ser, IAA-Thr, IAA-Tyr and IAA-Val. Is the most efficient enzyme of the ILL family for IAA-Ala. Not important for IAA-Leu hydrolysis in roots. May act with ILR1 to provide free IAA to germinating seedlings. The chain is IAA-amino acid hydrolase ILR1-like 2 from Arabidopsis thaliana (Mouse-ear cress).